Consider the following 399-residue polypeptide: Tyrosine--tRNA ligase (399 aa).

The short motif at 42–51 (PTAPDLHLGH) is the 'HIGH' region element. Residues 226-230 (KMSKS) carry the 'KMSKS' region motif. K229 is an ATP binding site. In terms of domain architecture, S4 RNA-binding spans 336 to 396 (MPIAAVLNKA…GRKAFARITL (61 aa)).

The protein belongs to the class-I aminoacyl-tRNA synthetase family. TyrS type 2 subfamily. Homodimer.

It is found in the cytoplasm. The enzyme catalyses tRNA(Tyr) + L-tyrosine + ATP = L-tyrosyl-tRNA(Tyr) + AMP + diphosphate + H(+). Catalyzes the attachment of tyrosine to tRNA(Tyr) in a two-step reaction: tyrosine is first activated by ATP to form Tyr-AMP and then transferred to the acceptor end of tRNA(Tyr). The polypeptide is Tyrosine--tRNA ligase (Pseudomonas fluorescens (strain ATCC BAA-477 / NRRL B-23932 / Pf-5)).